The sequence spans 261 residues: MAGDSEQTLQNHQQPNGGEPFLIGVSGGTASGKSSVCAKIVQLLGQNEVDYRQKQVVILSQDSFYRVLTSEQKAKALKGQFNFDHPDAFDNELILKTLKEITEGKTVQIPVYDFVSHSRKEETVTVYPADVVLFEGILAFYSQEVRDLFQMKLFVDTDADTRLSRRVLRDISERGRDLEQILSQYITFVKPAFEEFCLPTKKYADVIIPRGADNLVAINLIVQHIQDILNGGPSKRQTNGCLNGYTPSRKRQASESSSRPH.

Polar residues predominate over residues Met1–Asn16. The disordered stretch occupies residues Met1 to Gly24. Ala2 bears the N-acetylalanine mark. Residue Gly27–Ser35 coordinates ATP. Residues Asp84, Tyr112, His117, Arg166, Arg176, and Gln184 each coordinate substrate. Asp213 contributes to the ATP binding site. The segment at Arg236–His261 is disordered. The residue at position 254 (Ser254) is a Phosphoserine.

Belongs to the uridine kinase family. In terms of assembly, homotetramer. According to PubMed:8812458; testis-specific. According to PubMed:11306702, placenta-specific.

It catalyses the reaction uridine + ATP = UMP + ADP + H(+). The enzyme catalyses cytidine + ATP = CMP + ADP + H(+). It participates in pyrimidine metabolism; CTP biosynthesis via salvage pathway; CTP from cytidine: step 1/3. Its pathway is pyrimidine metabolism; UMP biosynthesis via salvage pathway; UMP from uridine: step 1/1. Functionally, phosphorylates uridine and cytidine to uridine monophosphate and cytidine monophosphate. Does not phosphorylate deoxyribonucleosides or purine ribonucleosides. Can use ATP or GTP as a phosphate donor. Can also phosphorylate cytidine and uridine nucleoside analogs such as 6-azauridine, 5-fluorouridine, 4-thiouridine, 5-bromouridine, N(4)-acetylcytidine, N(4)-benzoylcytidine, 5-fluorocytidine, 2-thiocytidine, 5-methylcytidine, and N(4)-anisoylcytidine. The protein is Uridine-cytidine kinase 2 (UCK2) of Homo sapiens (Human).